A 238-amino-acid polypeptide reads, in one-letter code: ATP synthase subunit a (238 aa).

5 consecutive transmembrane segments (helical) span residues 18–38 (LTLL…VFWA), 76–96 (YSLL…LGLF), 114–134 (NLAF…IEGI), 166–186 (SLAI…GLIV), and 193–213 (LYWW…SIFI).

The protein belongs to the ATPase A chain family. As to quaternary structure, F-type ATPases have 2 components, CF(1) - the catalytic core - and CF(0) - the membrane proton channel. CF(1) has five subunits: alpha(3), beta(3), gamma(1), delta(1), epsilon(1). CF(0) has three main subunits: a(1), b(2) and c(9-12). The alpha and beta chains form an alternating ring which encloses part of the gamma chain. CF(1) is attached to CF(0) by a central stalk formed by the gamma and epsilon chains, while a peripheral stalk is formed by the delta and b chains.

It localises to the cell membrane. Its function is as follows. Key component of the proton channel; it plays a direct role in the translocation of protons across the membrane. This is ATP synthase subunit a from Streptococcus equi subsp. zooepidemicus (strain H70).